The sequence spans 294 residues: Cell division protein ZipA (294 aa).

Met1 is a topological domain (periplasmic). A helical membrane pass occupies residues 2–22; that stretch reads EIGLREWLILIGIIVIAGILF. At 23–294 the chain is on the cytoplasmic side; that stretch reads DGWRRMRGGK…FERRALTQKR (272 aa). Residues 47–107 form a disordered region; that stretch reads PDEEGSAEVL…GKRAAEMQPQ (61 aa). Over residues 82–91 the composition is skewed to basic and acidic residues; sequence AREREREQKP.

Belongs to the ZipA family. In terms of assembly, interacts with FtsZ via their C-terminal domains.

Its subcellular location is the cell inner membrane. Essential cell division protein that stabilizes the FtsZ protofilaments by cross-linking them and that serves as a cytoplasmic membrane anchor for the Z ring. Also required for the recruitment to the septal ring of downstream cell division proteins. This Pseudomonas putida (strain W619) protein is Cell division protein ZipA.